Reading from the N-terminus, the 862-residue chain is Alpha,alpha-trehalose-phosphate synthase [UDP-forming] 5 (862 aa).

Position 5 is a phosphoserine (serine 5). Threonine 32 is modified (phosphothreonine). The segment at 60–546 (DRIIIVGNQL…ARSFIQDLER (487 aa)) is glycosyltransferase.

This sequence in the N-terminal section; belongs to the glycosyltransferase 20 family. The protein in the C-terminal section; belongs to the trehalose phosphatase family. As to quaternary structure, binds to the phosphopeptide-binding site of GRF/14-3-3 and to MBF1c. Post-translationally, both Ser-5 and Thr-32 must be phosphorylated for binding to GRF/14-3-3. Low expression in leaves, stems, flower buds, flowers and siliques.

It carries out the reaction D-glucose 6-phosphate + UDP-alpha-D-glucose = alpha,alpha-trehalose 6-phosphate + UDP + H(+). The polypeptide is Alpha,alpha-trehalose-phosphate synthase [UDP-forming] 5 (TPS5) (Arabidopsis thaliana (Mouse-ear cress)).